The chain runs to 763 residues: Eukaryotic translation initiation factor 3 subunit B (763 aa).

A sufficient for interaction with HCR1 and TIF32 region spans residues 1-136; sequence MKNFLPRTLK…LFVECGSMND (136 aa). Positions 28-261 are sufficient for interaction with PIC8; that stretch reads RNTQLKRSKI…GVTAWGGPNF (234 aa). Serine 61 carries the post-translational modification Phosphoserine. At tyrosine 67 the chain carries Phosphotyrosine. Residues 77–162 form the RRM domain; it reads QYIVVNGAPV…HRLFLYTMKD (86 aa). WD repeat units lie at residues 228 to 266, 277 to 325, 373 to 416, 484 to 524, 544 to 589, and 605 to 650; these read RENW…RLRR, VSPN…LMAT, LKPS…SACT, ELKD…IRFY, IPKT…EKNI, and PTYS…VKED. At serine 669 the chain carries Phosphoserine.

This sequence belongs to the eIF-3 subunit B family. As to quaternary structure, the eukaryotic translation initiation factor 3 (eIF-3) core complex is composed of TIF32, PRT1, NIP1, TIF34 and TIF35. A subcomplex of TIF32, NIP1 and PRT1 mediates the interaction with eIF-1, TIF5/eIF-5 and HCR1. The factors eIF-1, eIF-2, eIF-3, TIF5/eIF-5 and methionyl-tRNAi form a multifactor complex (MFC) that may bind to the 40S ribosome.

The protein resides in the cytoplasm. RNA-binding component of the eukaryotic translation initiation factor 3 (eIF-3) complex, which is involved in protein synthesis of a specialized repertoire of mRNAs and, together with other initiation factors, stimulates binding of mRNA and methionyl-tRNAi to the 40S ribosome. The eIF-3 complex specifically targets and initiates translation of a subset of mRNAs involved in cell proliferation. The sequence is that of Eukaryotic translation initiation factor 3 subunit B from Saccharomyces cerevisiae (strain ATCC 204508 / S288c) (Baker's yeast).